The primary structure comprises 811 residues: MLMTTPGSPLPSPDVLLEAANRAARAIPPLWPLASSVAVNPFLGQTGEPLATAASRLRRVAGIPLTMPRSWYADRLRSGEIAEEDLRAAFESAPAALRPKTFASLKRAVQSERPEPHAIPTLADLARDVAGIDWPAIVNDRISHWASSYFDEGQALWAKGQQGAAYSAWRIIATHDLTPEIAGLEGFAQSVADAPANAEDAIIACVARLGLCGPALESYFHRLLTTLGGWSQLARYRLWQAELTGNTDASVTDLLTIRLIWEAALLRKFGPVVEAQWKAAIAAYAEPVSATPEDVVDAILQEAAERAAQWRLGACLTGTSPARVADGRPTLQMAFCIDVRSEVFRRALESLDPGIRTLGFAGFFGLGIGHRRFGSDVVEARLPVLLKPGIFTCSGEATPAVTSSDLAARITARVERAWGRFKLAAISSFAFVEAAGPIYVAKLLRDGLGLKRHAAPNDPAPRPTSALDLDTRLTMAVSILKAMSLTRGFARLVLLAGHGANVVNNPHASALHCGACGGYSGEVNARLLASVLNDREVRADLAERGIIVPEDTLFLAALHDTTTDDVNIYAADHASAAHAEDVDQAERWLKSAGILARGERALRLPRAKQGQDIPHRARDWAELRPEWALAGCQAFIAAPRARTAGHDLAGRAFLHDYDWRRDDGFGVLELILTAPVVVASWISLQYYGSTVAPDVFGAGNKLLHNVTGGIGVVEGNGGLLRAGLPWQSVHDGERLTHEPLRLSVLIEAPREAIARILERHPEVRALFDNLWLHLFALDDKGRMAWRYTGDLQWETCVGDEHADEHSVREVA.

4 residues coordinate Zn(2+): cysteine 336, aspartate 338, histidine 498, and cysteine 513.

This sequence belongs to the inorganic carbon transporter (TC 9.A.2) DabA family. As to quaternary structure, forms a complex with DabB. Requires Zn(2+) as cofactor.

It localises to the cell inner membrane. Part of an energy-coupled inorganic carbon pump. The sequence is that of Probable inorganic carbon transporter subunit DabA from Azorhizobium caulinodans (strain ATCC 43989 / DSM 5975 / JCM 20966 / LMG 6465 / NBRC 14845 / NCIMB 13405 / ORS 571).